Here is a 260-residue protein sequence, read N- to C-terminus: Proteasome subunit alpha type-1 (260 aa).

The disordered stretch occupies residues 231-260; the sequence is FLEGLEERPQRKPALPADEPAEKAEEPMEH. A compositionally biased stretch (basic and acidic residues) spans 250–260; sequence PAEKAEEPMEH.

This sequence belongs to the peptidase T1A family. As to quaternary structure, the 26S proteasome consists of a 20S proteasome core and two 19S regulatory subunits. The 20S proteasome core is a barrel-shaped complex made of 28 subunits that are arranged in four stacked rings. The two outer rings are each formed by seven alpha subunits, and the two inner rings are formed by seven beta subunits. The proteolytic activity is exerted by three beta-subunits PSMB5, PSMB6 and PSMB7.

It localises to the cytoplasm. Its subcellular location is the nucleus. Its function is as follows. Component of the 20S core proteasome complex involved in the proteolytic degradation of most intracellular proteins. This complex plays numerous essential roles within the cell by associating with different regulatory particles. Associated with two 19S regulatory particles, forms the 26S proteasome and thus participates in the ATP-dependent degradation of ubiquitinated proteins. The 26S proteasome plays a key role in the maintenance of protein homeostasis by removing misfolded or damaged proteins that could impair cellular functions, and by removing proteins whose functions are no longer required. Associated with the PA200 or PA28, the 20S proteasome mediates ubiquitin-independent protein degradation. This type of proteolysis is required in several pathways including spermatogenesis (20S-PA200 complex) or generation of a subset of MHC class I-presented antigenic peptides (20S-PA28 complex). This is Proteasome subunit alpha type-1 (PSMA1) from Gallus gallus (Chicken).